A 627-amino-acid chain; its full sequence is Hemocyanin D chain (627 aa).

His171, His175, His202, His322, His326, and His362 together coordinate Cu cation. N-linked (GlcNAc...) asparagine glycosylation is present at Asn445. A disulfide bond links Cys531 and Cys579.

The protein belongs to the tyrosinase family. Hemocyanin subfamily. In terms of assembly, tarantula hemocyanin is a 24-chain polymer with seven different chains identified. As to expression, hemolymph.

It localises to the secreted. It is found in the extracellular space. Its function is as follows. Hemocyanins are copper-containing oxygen carriers occurring freely dissolved in the hemolymph of many mollusks and arthropods. This Aphonopelma sp. (American tarantula) protein is Hemocyanin D chain (HCD).